Reading from the N-terminus, the 483-residue chain is Sphingomyelin synthase-related 1 (483 aa).

Transmembrane regions (helical) follow at residues 182–202 (LIAFAYSSLSFLMTSFVMVLV), 230–250 (FDMCETIGLVLAVVWFTVLFF), and 261–281 (MFSLLGTVFLLRCFTMLITSL). The active site involves His330. The chain crosses the membrane as a helical span at residues 349-369 (WTGLHTFTWVLNCFAIFLILA). Active-site residues include His373 and Asp377. A helical transmembrane segment spans residues 376–396 (IDVFIAFYISSRMFLYYHAYA). The Cytoplasmic segment spans residues 397–483 (YNHAGITATD…NSKNHTKKHN (87 aa)). Residues 450–461 (EPKITPKSDSSR) are compositionally biased toward basic and acidic residues. Residues 450–483 (EPKITPKSDSSRKRSSVVAAKQNGNSKNHTKKHN) form a disordered region.

Belongs to the sphingomyelin synthase family.

It is found in the membrane. In Caenorhabditis elegans, this protein is Sphingomyelin synthase-related 1.